Here is a 186-residue protein sequence, read N- to C-terminus: ATP synthase subunit delta (186 aa).

It belongs to the ATPase delta chain family. In terms of assembly, F-type ATPases have 2 components, F(1) - the catalytic core - and F(0) - the membrane proton channel. F(1) has five subunits: alpha(3), beta(3), gamma(1), delta(1), epsilon(1). CF(0) has four main subunits: a(1), b(1), b'(1) and c(10-14). The alpha and beta chains form an alternating ring which encloses part of the gamma chain. F(1) is attached to F(0) by a central stalk formed by the gamma and epsilon chains, while a peripheral stalk is formed by the delta, b and b' chains.

The protein localises to the cell inner membrane. F(1)F(0) ATP synthase produces ATP from ADP in the presence of a proton or sodium gradient. F-type ATPases consist of two structural domains, F(1) containing the extramembraneous catalytic core and F(0) containing the membrane proton channel, linked together by a central stalk and a peripheral stalk. During catalysis, ATP synthesis in the catalytic domain of F(1) is coupled via a rotary mechanism of the central stalk subunits to proton translocation. In terms of biological role, this protein is part of the stalk that links CF(0) to CF(1). It either transmits conformational changes from CF(0) to CF(1) or is implicated in proton conduction. This Cereibacter sphaeroides (strain ATCC 17029 / ATH 2.4.9) (Rhodobacter sphaeroides) protein is ATP synthase subunit delta.